Reading from the N-terminus, the 200-residue chain is Ankyrin repeat-containing protein YAR1 (200 aa).

ANK repeat units follow at residues 49-78 (SDST…RANS) and 92-121 (TGNT…ADPF). Ser-78 bears the Phosphoserine mark. Residues 152-173 (VEPEDDEEDTQTEGKNSVQITK) form a disordered region. Over residues 153–162 (EPEDDEEDTQ) the composition is skewed to acidic residues. Residues 164–173 (EGKNSVQITK) show a composition bias toward polar residues.

In terms of biological role, required for normal rate of cell proliferation. This is Ankyrin repeat-containing protein YAR1 (YAR1) from Saccharomyces cerevisiae (strain ATCC 204508 / S288c) (Baker's yeast).